A 591-amino-acid chain; its full sequence is Aspartate--tRNA(Asp/Asn) ligase (591 aa).

Position 174 (E174) interacts with L-aspartate. Residues 198-201 form an aspartate region; it reads QLFK. R220 is an L-aspartate binding site. Residues 220-222 and Q229 contribute to the ATP site; that span reads RDE. L-aspartate is bound at residue H450. E483 lines the ATP pocket. R490 provides a ligand contact to L-aspartate. 535 to 538 contacts ATP; the sequence is GLDR.

The protein belongs to the class-II aminoacyl-tRNA synthetase family. Type 1 subfamily. In terms of assembly, homodimer.

The protein localises to the cytoplasm. The catalysed reaction is tRNA(Asx) + L-aspartate + ATP = L-aspartyl-tRNA(Asx) + AMP + diphosphate. Functionally, aspartyl-tRNA synthetase with relaxed tRNA specificity since it is able to aspartylate not only its cognate tRNA(Asp) but also tRNA(Asn). Reaction proceeds in two steps: L-aspartate is first activated by ATP to form Asp-AMP and then transferred to the acceptor end of tRNA(Asp/Asn). This chain is Aspartate--tRNA(Asp/Asn) ligase, found in Pseudomonas syringae pv. tomato (strain ATCC BAA-871 / DC3000).